The following is a 130-amino-acid chain: Transcription antitermination protein NusB (130 aa).

This sequence belongs to the NusB family.

Involved in transcription antitermination. Required for transcription of ribosomal RNA (rRNA) genes. Binds specifically to the boxA antiterminator sequence of the ribosomal RNA (rrn) operons. This is Transcription antitermination protein NusB from Bacillus cereus (strain ATCC 10987 / NRS 248).